The sequence spans 218 residues: Thiopurine S-methyltransferase (218 aa).

The S-adenosyl-L-methionine site is built by tryptophan 10, leucine 45, glutamate 66, and arginine 123.

This sequence belongs to the class I-like SAM-binding methyltransferase superfamily. TPMT family.

Its subcellular location is the cytoplasm. The enzyme catalyses S-adenosyl-L-methionine + a thiopurine = S-adenosyl-L-homocysteine + a thiopurine S-methylether.. This Shewanella amazonensis (strain ATCC BAA-1098 / SB2B) protein is Thiopurine S-methyltransferase.